The following is a 356-amino-acid chain: Heat-inducible transcription repressor HrcA (356 aa).

It belongs to the HrcA family.

In terms of biological role, negative regulator of class I heat shock genes (grpE-dnaK-dnaJ and groELS operons). Prevents heat-shock induction of these operons. This Bartonella henselae (strain ATCC 49882 / DSM 28221 / CCUG 30454 / Houston 1) (Rochalimaea henselae) protein is Heat-inducible transcription repressor HrcA.